Reading from the N-terminus, the 393-residue chain is Pyrin and HIN domain-containing protein 1-like (393 aa).

Positions 1–87 (MVNEYKRIVL…ANKLKNEKAK (87 aa)) constitute a Pyrin domain. Positions 82 to 188 (KNEKAKAKRK…TPTRSSSRIL (107 aa)) are disordered. Residues 87-102 (KAKRKGKGKRKTAAKR) are compositionally biased toward basic residues. Polar residues-rich tracts occupy residues 108-118 (PSTSQPMSTTN) and 126-151 (GRST…AIQI). The span at 152-169 (SPTIASSSGQTSSRSSET) shows a compositional bias: low complexity. The span at 170–186 (LQSIIQSPETPTRSSSR) shows a compositional bias: polar residues. The HIN-200 domain occupies 219–393 (NVPKEPSEEN…NPGDKLRLML (175 aa)).

The protein belongs to the HIN-200 family.

It is found in the nucleus. The protein is Pyrin and HIN domain-containing protein 1-like of Mus musculus (Mouse).